Here is a 142-residue protein sequence, read N- to C-terminus: Small heat shock protein IbpB (142 aa).

The sHSP domain maps to 26-137 (SGESQSFPPY…APQRIAINER (112 aa)).

Belongs to the small heat shock protein (HSP20) family. In terms of assembly, homodimer. Forms homomultimers of about 100-150 subunits at optimal growth temperatures. Conformation changes to oligomers at high temperatures or high ionic concentrations. The decrease in size of the multimers is accompanied by an increase in chaperone activity.

The protein resides in the cytoplasm. In terms of biological role, associates with aggregated proteins, together with IbpA, to stabilize and protect them from irreversible denaturation and extensive proteolysis during heat shock and oxidative stress. Aggregated proteins bound to the IbpAB complex are more efficiently refolded and reactivated by the ATP-dependent chaperone systems ClpB and DnaK/DnaJ/GrpE. Its activity is ATP-independent. The chain is Small heat shock protein IbpB from Salmonella newport (strain SL254).